The primary structure comprises 385 residues: Xanthosine methyltransferase 2 (385 aa).

An S-adenosyl-L-homocysteine-binding site is contributed by Tyr18. The xanthosine site is built by Asn21 and Asn25. 7 residues coordinate S-adenosyl-L-homocysteine: Cys62, Asn67, Asp101, Leu102, Ser140, Phe141, and Cys157. Tyr158 provides a ligand contact to xanthosine. Cys159 contributes to the S-adenosyl-L-homocysteine binding site. His161 and Trp162 together coordinate xanthosine. 4 residues coordinate Mg(2+): Asn179, Asp261, Phe263, and Asn264. Residues Ser329, Tyr334, and Tyr369 each coordinate xanthosine.

Belongs to the methyltransferase superfamily. Type-7 methyltransferase family. Mg(2+) is required as a cofactor. Expressed at low levels in young leaves but not in mature leaves. Barely detectable in fruits (grains).

It catalyses the reaction xanthosine + S-adenosyl-L-methionine = 7-methylxanthosine + S-adenosyl-L-homocysteine. It functions in the pathway alkaloid biosynthesis. Its function is as follows. Involved in the biosynthesis of caffeine. Specific for xanthosine and could not use xanthosine 5'-monophosphate (XMP) as substrate. Catalyzes the 7-N-methylation activity of xanthosine, but does not have 1-N- or 3-N-methylation activity. The polypeptide is Xanthosine methyltransferase 2 (Coffea arabica (Arabian coffee)).